Reading from the N-terminus, the 489-residue chain is Cobyric acid synthase (489 aa).

The GATase cobBQ-type domain occupies 251–439 (RLTVVAPVYP…LHGLFDTPAA (189 aa)). The Nucleophile role is filled by cysteine 332. Histidine 431 is an active-site residue.

Belongs to the CobB/CobQ family. CobQ subfamily.

It functions in the pathway cofactor biosynthesis; adenosylcobalamin biosynthesis. Functionally, catalyzes amidations at positions B, D, E, and G on adenosylcobyrinic A,C-diamide. NH(2) groups are provided by glutamine, and one molecule of ATP is hydrogenolyzed for each amidation. The chain is Cobyric acid synthase from Aromatoleum aromaticum (strain DSM 19018 / LMG 30748 / EbN1) (Azoarcus sp. (strain EbN1)).